The primary structure comprises 486 residues: Malonate-semialdehyde dehydrogenase 2 (486 aa).

Residues F154, K178, E181, R182, and S231 each coordinate NAD(+). C286 serves as the catalytic Nucleophile. Position 385 (E385) interacts with NAD(+).

It belongs to the aldehyde dehydrogenase family. IolA subfamily. As to quaternary structure, homotetramer.

The enzyme catalyses 3-oxopropanoate + NAD(+) + CoA + H2O = hydrogencarbonate + acetyl-CoA + NADH + H(+). It catalyses the reaction 2-methyl-3-oxopropanoate + NAD(+) + CoA + H2O = propanoyl-CoA + hydrogencarbonate + NADH + H(+). It participates in polyol metabolism; myo-inositol degradation into acetyl-CoA; acetyl-CoA from myo-inositol: step 7/7. Its function is as follows. Catalyzes the oxidation of malonate semialdehyde (MSA) and methylmalonate semialdehyde (MMSA) into acetyl-CoA and propanoyl-CoA, respectively. Is involved in a myo-inositol catabolic pathway. Bicarbonate, and not CO2, is the end-product of the enzymatic reaction. This Shouchella clausii (strain KSM-K16) (Alkalihalobacillus clausii) protein is Malonate-semialdehyde dehydrogenase 2.